The following is a 415-amino-acid chain: Dihydroorotase (415 aa).

Residues His54 and His56 each coordinate Zn(2+). Residues His56–Arg58 and Asn88 each bind substrate. Zn(2+) contacts are provided by Lys136, His169, His217, and Asp278. Lys136 carries the N6-carboxylysine modification. Residue Asp278 is part of the active site. Substrate is bound at residue His282.

Belongs to the metallo-dependent hydrolases superfamily. DHOase family. Class I DHOase subfamily. Zn(2+) is required as a cofactor.

The enzyme catalyses (S)-dihydroorotate + H2O = N-carbamoyl-L-aspartate + H(+). It participates in pyrimidine metabolism; UMP biosynthesis via de novo pathway; (S)-dihydroorotate from bicarbonate: step 3/3. Catalyzes the reversible cyclization of carbamoyl aspartate to dihydroorotate. The chain is Dihydroorotase from Thermoplasma volcanium (strain ATCC 51530 / DSM 4299 / JCM 9571 / NBRC 15438 / GSS1).